A 359-amino-acid chain; its full sequence is 3-dehydroquinate synthase (359 aa).

Residues 69 to 74, 103 to 107, 127 to 128, K140, and K149 contribute to the NAD(+) site; these read DAETGK, GAATD, and TT. Positions 182, 244, and 260 each coordinate Zn(2+).

It belongs to the sugar phosphate cyclases superfamily. Dehydroquinate synthase family. The cofactor is Co(2+). Zn(2+) is required as a cofactor. It depends on NAD(+) as a cofactor.

It localises to the cytoplasm. The enzyme catalyses 7-phospho-2-dehydro-3-deoxy-D-arabino-heptonate = 3-dehydroquinate + phosphate. It functions in the pathway metabolic intermediate biosynthesis; chorismate biosynthesis; chorismate from D-erythrose 4-phosphate and phosphoenolpyruvate: step 2/7. In terms of biological role, catalyzes the conversion of 3-deoxy-D-arabino-heptulosonate 7-phosphate (DAHP) to dehydroquinate (DHQ). The polypeptide is 3-dehydroquinate synthase (Corynebacterium diphtheriae (strain ATCC 700971 / NCTC 13129 / Biotype gravis)).